A 141-amino-acid chain; its full sequence is Protein NrdI (141 aa).

Belongs to the NrdI family.

Its function is as follows. Probably involved in ribonucleotide reductase function. The chain is Protein NrdI from Wigglesworthia glossinidia brevipalpis.